The chain runs to 721 residues: Glycine--tRNA ligase beta subunit (721 aa).

It belongs to the class-II aminoacyl-tRNA synthetase family. As to quaternary structure, tetramer of two alpha and two beta subunits.

It localises to the cytoplasm. The enzyme catalyses tRNA(Gly) + glycine + ATP = glycyl-tRNA(Gly) + AMP + diphosphate. The chain is Glycine--tRNA ligase beta subunit from Sinorhizobium fredii (strain NBRC 101917 / NGR234).